The chain runs to 164 residues: Phosphopantetheine adenylyltransferase (164 aa).

Substrate is bound at residue Ser-9. ATP contacts are provided by residues 9–10 (SF) and His-17. Lys-41, Thr-74, and Arg-88 together coordinate substrate. Residues 89-91 (GVR), Glu-99, and 124-130 (NSFVASS) contribute to the ATP site.

The protein belongs to the bacterial CoaD family. In terms of assembly, homohexamer. The cofactor is Mg(2+).

It localises to the cytoplasm. It catalyses the reaction (R)-4'-phosphopantetheine + ATP + H(+) = 3'-dephospho-CoA + diphosphate. It functions in the pathway cofactor biosynthesis; coenzyme A biosynthesis; CoA from (R)-pantothenate: step 4/5. In terms of biological role, reversibly transfers an adenylyl group from ATP to 4'-phosphopantetheine, yielding dephospho-CoA (dPCoA) and pyrophosphate. In Lactobacillus helveticus (strain DPC 4571), this protein is Phosphopantetheine adenylyltransferase.